The following is a 723-amino-acid chain: Catalase-peroxidase (723 aa).

The segment at residues 97–225 is a cross-link (tryptophyl-tyrosyl-methioninium (Trp-Tyr) (with M-251)); the sequence is WHAAGSYRVT…LAAVQMGLIY (129 aa). H98 serves as the catalytic Proton acceptor. The segment at residues 225-251 is a cross-link (tryptophyl-tyrosyl-methioninium (Tyr-Met) (with W-97)); the sequence is YVNPEGVNGKSDPLATAAQMRETFARM. H266 contributes to the heme b binding site.

Belongs to the peroxidase family. Peroxidase/catalase subfamily. In terms of assembly, homodimer or homotetramer. It depends on heme b as a cofactor. Post-translationally, formation of the three residue Trp-Tyr-Met cross-link is important for the catalase, but not the peroxidase activity of the enzyme.

It carries out the reaction H2O2 + AH2 = A + 2 H2O. The catalysed reaction is 2 H2O2 = O2 + 2 H2O. Bifunctional enzyme with both catalase and broad-spectrum peroxidase activity. This Agrobacterium fabrum (strain C58 / ATCC 33970) (Agrobacterium tumefaciens (strain C58)) protein is Catalase-peroxidase.